Here is a 235-residue protein sequence, read N- to C-terminus: MNRQLIIAIDGPSGVGKSTLSRRLAQQLRYVNIDTGAMYRCVALAAHRAGLAADDEKSLQALCADMEIRFVRKDGTEKVLLNGEDVSEAIRTPEISLLSSRVSAQPTVRQCMLGLQRQMGEQGGVVLEGRDIGTVVFPSAEVKFFLAATARERGKRRYLELKAKGMDVDLDQTIAEVEARDAADSGRLHAPLRQAEDAVLIDTTCMNIDQVLERMLQVVAERQQVCDPSKEGAAS.

An ATP-binding site is contributed by 11 to 19 (GPSGVGKST).

The protein belongs to the cytidylate kinase family. Type 1 subfamily.

Its subcellular location is the cytoplasm. It catalyses the reaction CMP + ATP = CDP + ADP. It carries out the reaction dCMP + ATP = dCDP + ADP. This Syntrophotalea carbinolica (strain DSM 2380 / NBRC 103641 / GraBd1) (Pelobacter carbinolicus) protein is Cytidylate kinase.